A 629-amino-acid polypeptide reads, in one-letter code: Nicotinic receptor-associated protein 1 (629 aa).

2 consecutive C2 domains span residues 1 to 144 (MNQP…KAHL) and 162 to 299 (RTGS…ELLL). Aspartate 33, aspartate 39, aspartate 108, aspartate 110, aspartate 122, aspartate 192, aspartate 198, aspartate 254, aspartate 256, and aspartate 274 together coordinate Ca(2+). Residues 342-561 (EFAVAVDFTA…LDPDVVQENL (220 aa)) enclose the VWFA domain. 2 disordered regions span residues 581-600 (GFQP…PPDY) and 607-629 (IGRR…PPMY).

Belongs to the copine family. In terms of assembly, interacts with nicotinic acetylcholine receptor. The cofactor is Ca(2+).

It is found in the cell membrane. Its function is as follows. Exhibits calcium-dependent phospholipid binding properties. May function in membrane trafficking. Regulates synaptic levels of nicotinic acetylcholine receptor subunit lev-1 and unc-38 in the nerve cord. Involved in nicotinic acetylcholine receptor (nAChR)-mediated sensitivity to nicotine and levamisole. Affects directional sperm motility. The sequence is that of Nicotinic receptor-associated protein 1 from Caenorhabditis briggsae.